We begin with the raw amino-acid sequence, 377 residues long: tRNA(Met) cytidine acetate ligase (377 aa).

ATP-binding positions include 7-20, Gly101, Asn152, and Arg179; that span reads ITEY…HLYH.

This sequence belongs to the TmcAL family.

It is found in the cytoplasm. It carries out the reaction cytidine(34) in elongator tRNA(Met) + acetate + ATP = N(4)-acetylcytidine(34) in elongator tRNA(Met) + AMP + diphosphate. Catalyzes the formation of N(4)-acetylcytidine (ac(4)C) at the wobble position of elongator tRNA(Met), using acetate and ATP as substrates. First activates an acetate ion to form acetyladenylate (Ac-AMP) and then transfers the acetyl group to tRNA to form ac(4)C34. The sequence is that of tRNA(Met) cytidine acetate ligase from Oenococcus oeni (strain ATCC BAA-331 / PSU-1).